A 245-amino-acid chain; its full sequence is Orotidine 5'-phosphate decarboxylase (245 aa).

Substrate-binding positions include D22, K44, 71–80 (DLKFHDIPNT), T131, R192, Q201, G221, and R222. The Proton donor role is filled by K73.

Belongs to the OMP decarboxylase family. Type 1 subfamily. In terms of assembly, homodimer.

It carries out the reaction orotidine 5'-phosphate + H(+) = UMP + CO2. Its pathway is pyrimidine metabolism; UMP biosynthesis via de novo pathway; UMP from orotate: step 2/2. In terms of biological role, catalyzes the decarboxylation of orotidine 5'-monophosphate (OMP) to uridine 5'-monophosphate (UMP). The sequence is that of Orotidine 5'-phosphate decarboxylase from Yersinia pseudotuberculosis serotype O:1b (strain IP 31758).